The primary structure comprises 346 residues: MFIDKAKIYVKAGDGGNGCVAFLREKYVPFGGPAGGDGGKGGDIILIADSSLQTLMDFKYKRHYKAERGQHGQGGNKKGKDGEDLILKVPIGTVVKDAETGEIIADLVKKGQSVVVAKGGKGGRGNAAFKSPTNQAPMVAEKGELGEERWIELELKLLADVGIIGFPNAGKSTLISILSKARPKIADYPFTTLTPVLGVLQLDVNDYIVLADIPGLIEGASEGLGLGHEFLRHIERTKFLIHLIDVSDFRERDPIDAFNIINKELEKYSPDLIKKPQIVVANKIDALSDKSLLDNLEKYFSERGYPFVAVSLITRENIDKLINLIRETRDKMKKEEVNESVILGNA.

Residues methionine 1–leucine 158 form the Obg domain. The OBG-type G domain occupies alanine 159 to aspartate 330. GTP-binding positions include glycine 165–serine 172, phenylalanine 190–threonine 194, aspartate 212–glycine 215, asparagine 282–aspartate 285, and serine 311–isoleucine 313. Mg(2+) is bound by residues serine 172 and threonine 192.

It belongs to the TRAFAC class OBG-HflX-like GTPase superfamily. OBG GTPase family. Monomer. Mg(2+) serves as cofactor.

It localises to the cytoplasm. Functionally, an essential GTPase which binds GTP, GDP and possibly (p)ppGpp with moderate affinity, with high nucleotide exchange rates and a fairly low GTP hydrolysis rate. Plays a role in control of the cell cycle, stress response, ribosome biogenesis and in those bacteria that undergo differentiation, in morphogenesis control. This chain is GTPase Obg, found in Sulfurihydrogenibium sp. (strain YO3AOP1).